The following is a 372-amino-acid chain: Queuine tRNA-ribosyltransferase (372 aa).

D89 serves as the catalytic Proton acceptor. Residues 89-93, D161, and G232 each bind substrate; that span reads DSGGF. Positions 262 to 268 are RNA binding; it reads GIGDLPS. Residue D281 is the Nucleophile of the active site. An RNA binding; important for wobble base 34 recognition region spans residues 286–290; it reads TKAAR. Residues C319, C321, C324, and H351 each contribute to the Zn(2+) site.

It belongs to the queuine tRNA-ribosyltransferase family. Homodimer. Within each dimer, one monomer is responsible for RNA recognition and catalysis, while the other monomer binds to the replacement base PreQ1. Zn(2+) serves as cofactor.

It carries out the reaction 7-aminomethyl-7-carbaguanine + guanosine(34) in tRNA = 7-aminomethyl-7-carbaguanosine(34) in tRNA + guanine. The protein operates within tRNA modification; tRNA-queuosine biosynthesis. Functionally, catalyzes the base-exchange of a guanine (G) residue with the queuine precursor 7-aminomethyl-7-deazaguanine (PreQ1) at position 34 (anticodon wobble position) in tRNAs with GU(N) anticodons (tRNA-Asp, -Asn, -His and -Tyr). Catalysis occurs through a double-displacement mechanism. The nucleophile active site attacks the C1' of nucleotide 34 to detach the guanine base from the RNA, forming a covalent enzyme-RNA intermediate. The proton acceptor active site deprotonates the incoming PreQ1, allowing a nucleophilic attack on the C1' of the ribose to form the product. After dissociation, two additional enzymatic reactions on the tRNA convert PreQ1 to queuine (Q), resulting in the hypermodified nucleoside queuosine (7-(((4,5-cis-dihydroxy-2-cyclopenten-1-yl)amino)methyl)-7-deazaguanosine). The chain is Queuine tRNA-ribosyltransferase from Chlamydia felis (strain Fe/C-56) (Chlamydophila felis).